The following is a 95-amino-acid chain: Aspartyl/glutamyl-tRNA(Asn/Gln) amidotransferase subunit C (95 aa).

The protein belongs to the GatC family. As to quaternary structure, heterotrimer of A, B and C subunits.

It catalyses the reaction L-glutamyl-tRNA(Gln) + L-glutamine + ATP + H2O = L-glutaminyl-tRNA(Gln) + L-glutamate + ADP + phosphate + H(+). The enzyme catalyses L-aspartyl-tRNA(Asn) + L-glutamine + ATP + H2O = L-asparaginyl-tRNA(Asn) + L-glutamate + ADP + phosphate + 2 H(+). In terms of biological role, allows the formation of correctly charged Asn-tRNA(Asn) or Gln-tRNA(Gln) through the transamidation of misacylated Asp-tRNA(Asn) or Glu-tRNA(Gln) in organisms which lack either or both of asparaginyl-tRNA or glutaminyl-tRNA synthetases. The reaction takes place in the presence of glutamine and ATP through an activated phospho-Asp-tRNA(Asn) or phospho-Glu-tRNA(Gln). This Pseudomonas syringae pv. syringae (strain B728a) protein is Aspartyl/glutamyl-tRNA(Asn/Gln) amidotransferase subunit C.